The sequence spans 187 residues: Pyridoxal 5'-phosphate synthase subunit PdxT (187 aa).

G47 to S49 is an L-glutamine binding site. The active-site Nucleophile is C76. Residues R102 and I128–R129 each bind L-glutamine. Catalysis depends on charge relay system residues H165 and E167.

It belongs to the glutaminase PdxT/SNO family. In the presence of PdxS, forms a dodecamer of heterodimers. Only shows activity in the heterodimer.

The catalysed reaction is aldehydo-D-ribose 5-phosphate + D-glyceraldehyde 3-phosphate + L-glutamine = pyridoxal 5'-phosphate + L-glutamate + phosphate + 3 H2O + H(+). The enzyme catalyses L-glutamine + H2O = L-glutamate + NH4(+). It functions in the pathway cofactor biosynthesis; pyridoxal 5'-phosphate biosynthesis. In terms of biological role, catalyzes the hydrolysis of glutamine to glutamate and ammonia as part of the biosynthesis of pyridoxal 5'-phosphate. The resulting ammonia molecule is channeled to the active site of PdxS. This Methanococcus maripaludis (strain C7 / ATCC BAA-1331) protein is Pyridoxal 5'-phosphate synthase subunit PdxT.